Here is a 574-residue protein sequence, read N- to C-terminus: Egalitarian protein homolog (574 aa).

Positions 259 to 278 (LNEDGSENGSDEGEETNNNG) are disordered. A compositionally biased stretch (acidic residues) spans 262–273 (DGSENGSDEGEE). The region spanning 312-414 (NMEKKVVGLD…SLLQHEKFNK (103 aa)) is the 3'-5' exonuclease domain.

In terms of assembly, component of a dynein-regulating complex composed of at least bicd-1, dlc-1 and egal-1.

It is found in the nucleus envelope. In terms of biological role, part of a complex with bicd-1 and dlc-1, which is recruited to the nuclear envelope by unc-83, where in turn, it recruits dynein to the nuclear surface and regulates nuclear migration in hypodermal precursor cells. This is Egalitarian protein homolog from Caenorhabditis elegans.